We begin with the raw amino-acid sequence, 250 residues long: Ribosomal RNA-processing protein 15 (250 aa).

The segment covering 1–27 (MGSKHRVDTKDKKRTRKNAEFGREKRN) has biased composition (basic and acidic residues). The segment at 1–101 (MGSKHRVDTK…NSKHDDGSTG (101 aa)) is disordered. Composition is skewed to acidic residues over residues 43 to 53 (MEGDEAEEDEQ) and 67 to 83 (EQSDAEEDDDEEEEDDD). Ser-69 is modified (phosphoserine).

It belongs to the RRP15 family.

It is found in the nucleus. It localises to the nucleolus. Constituent of pre-60S ribosomal particles. Required for large subunit rRNA maturation, in particular processing of the 27S pre-rRNA at the A3 and B1 sites to yield 5.8S and 25S rRNA. The chain is Ribosomal RNA-processing protein 15 from Saccharomyces cerevisiae (strain ATCC 204508 / S288c) (Baker's yeast).